We begin with the raw amino-acid sequence, 444 residues long: CCA-adding enzyme (444 aa).

2 residues coordinate ATP: Ser-57 and Arg-60. The CTP site is built by Ser-57 and Arg-60. 3 residues coordinate Mg(2+): Asp-69, Asp-71, and Asp-124. 3 residues coordinate ATP: His-147, Lys-168, and Tyr-177. Positions 147, 168, and 177 each coordinate CTP.

The protein belongs to the tRNA nucleotidyltransferase/poly(A) polymerase family. Archaeal CCA-adding enzyme subfamily. As to quaternary structure, homodimer. The cofactor is Mg(2+).

The enzyme catalyses a tRNA precursor + 2 CTP + ATP = a tRNA with a 3' CCA end + 3 diphosphate. The catalysed reaction is a tRNA with a 3' CCA end + 2 CTP + ATP = a tRNA with a 3' CCACCA end + 3 diphosphate. Functionally, catalyzes the addition and repair of the essential 3'-terminal CCA sequence in tRNAs without using a nucleic acid template. Adds these three nucleotides in the order of C, C, and A to the tRNA nucleotide-73, using CTP and ATP as substrates and producing inorganic pyrophosphate. tRNA 3'-terminal CCA addition is required both for tRNA processing and repair. Also involved in tRNA surveillance by mediating tandem CCA addition to generate a CCACCA at the 3' terminus of unstable tRNAs. While stable tRNAs receive only 3'-terminal CCA, unstable tRNAs are marked with CCACCA and rapidly degraded. The polypeptide is CCA-adding enzyme (Methanococcus maripaludis (strain C7 / ATCC BAA-1331)).